We begin with the raw amino-acid sequence, 603 residues long: Prosaposin receptor GPR37 (603 aa).

The signal sequence occupies residues 1-26 (MPAPGAPLSRTSRLLLLLLFKVSVSA). Topologically, residues 27 to 255 (ALSFVPEPRN…QESYGAYAVM (229 aa)) are extracellular. An N-linked (GlcNAc...) asparagine glycan is attached at N36. The segment at 39–232 (CLGESCSPLI…GGPRRGNSTN (194 aa)) is disordered. Basic and acidic residues-rich tracts occupy residues 51 to 79 (RSRDAGGPRNSARDALRVHVPREKLEAEV), 145 to 158 (TSERGEMSSKRDEI), and 165 to 175 (HSVKTEPEPRD). Residues N212 and N229 are each glycosylated (N-linked (GlcNAc...) asparagine). A helical membrane pass occupies residues 256 to 276 (CLSVVIFGTGIIGNLAVMCIV). The Cytoplasmic portion of the chain corresponds to 277–289 (CHNYYMRSISNSL). Residues 290–310 (LANLAFWDFLIIFFCLPLVIF) form a helical membrane-spanning segment. At 311–325 (HELTKKWLLEDFSCK) the chain is on the extracellular side. Residues C324 and C409 are joined by a disulfide bond. Residues 326–346 (IVPYIEVASLGVTTFTLCALC) form a helical membrane-spanning segment. Over 347-369 (IDRFRAATNVQMYYEMIENCSST) the chain is Cytoplasmic. The helical transmembrane segment at 370-390 (TAKLAVIWVGALLLALPEVVL) threads the bilayer. The Extracellular portion of the chain corresponds to 391–433 (RQLSKEDLGFSGQAPAERCVIKISPDLPDTIYVLALTYDGARL). The helical transmembrane segment at 434–454 (WWYFGCYFCLPTLFTITCSLV) threads the bilayer. Residues 455–483 (TARKIRKAEKASTRGNKRQIHLESQMNCT) lie on the Cytoplasmic side of the membrane. Residues 484 to 504 (VVALTILYGFCIIPENICNIV) form a helical membrane-spanning segment. The Extracellular portion of the chain corresponds to 505-521 (TAYMATGVSQQTMDLLN). Residues 522 to 542 (IISQFLLFFKSCVTPVLLFCL) traverse the membrane as a helical segment. The Cytoplasmic segment spans residues 543–603 (CRPFSRAFME…STFASVGTHC (61 aa)).

It belongs to the G-protein coupled receptor 1 family. As to quaternary structure, forms a complex with PRKN, STUB1 and HSP70. The amount of STUB1 in the complex increases during ER stress. STUB1 promotes the dissociation of HSP70 from PRKN, thus facilitating PRKN-mediated GPR37 ubiquitination. Interacts with PACRG. Post-translationally, the N-terminus is cleaved by ADAM10 metalloproteinase; mediating limited proteolysis leading to the release of receptor ectodomain by shedding. In addition, cleaved by FURIN between Arg-53 and Asp-54. Ubiquitinated by PRKN in the presence of UBE2E1 and UBE2L3 in the endoplasmic reticulum. The unfolded form is specifically ubiquitinated by SYVN1, which promotes its proteasomal degradation and prevents neuronal cell death. Highly expressed in the brain. High levels of expression were seen in fiber tracts such as the corpus callosum, anterior commissure, fornix, internal capsule, cerebral peduncles, and stria terminalis. Additionally, moderate levels of expression were seen in the pyramidal tracts and cerebellar peduncles, as well as in the spinal tract of the trigeminal nerve and the spinal fasciculi.

It localises to the cell projection. The protein resides in the dendrite. The protein localises to the synapse. It is found in the cell membrane. Its subcellular location is the endoplasmic reticulum membrane. Its function is as follows. G-protein-coupled receptor that plays a role in several physiological pathways such as resolution of inflammatory pain and oligodendrocyte differentiation. Acts as a receptor for several ligands including prosaposin, osteocalcin or neuroprotectin D1. Ligand binding induces endocytosis, followed by an ERK phosphorylation cascade. Acts as a receptor for osteocalcin (OCN) to regulate oligodendrocyte differentiation and central nervous system myelination. Mechanistically, plays a negative role in oligodendrocyte differentiation and myelination during development via activation of the ERK1/2 signaling pathway. Therefore, regulates the stability of myelin or resistance of myelin itself to demyelination. Upon activation by neuroprotectin D1 (NPD1), promotes the activation of phagocytosis in macrophages as well as the shift in cytokine release toward an anti-inflammatory profile, and thus helps to reverse inflammatory pain. In addition, the increased macrophage phagocytosis mediates protection against sepsis upon pathogen infection. Additionally, extracellular vesicles derived from efferocyte express prosaposin, which binds to macrophage GPR37 to increase expression of the efferocytosis receptor TIM4 via an ERK-AP1-dependent signaling axis, leading to increased macrophage efferocytosis efficiency and accelerated resolution of inflammation. May also act as a maturation factor of LRP6, protecting LRP6 from the endoplasmic reticulum (ER)-associated protein degradation (ERAD) and thereby promoting the Wnt/beta-catenin signaling pathway. The protein is Prosaposin receptor GPR37 (Gpr37) of Rattus norvegicus (Rat).